We begin with the raw amino-acid sequence, 83 residues long: ATP synthase subunit c, chloroplastic (83 aa).

2 helical membrane passes run 4–24 (IISAASVIAAGLAVGLAAIGP) and 57–77 (LAFMEALTIYGLVVALSLLFA).

The protein belongs to the ATPase C chain family. F-type ATPases have 2 components, F(1) - the catalytic core - and F(0) - the membrane proton channel. F(1) has five subunits: alpha(3), beta(3), gamma(1), delta(1), epsilon(1). F(0) has four main subunits: a(1), b(1), b'(1) and c(10-14). The alpha and beta chains form an alternating ring which encloses part of the gamma chain. F(1) is attached to F(0) by a central stalk formed by the gamma and epsilon chains, while a peripheral stalk is formed by the delta, b and b' chains.

Its subcellular location is the plastid. It is found in the chloroplast thylakoid membrane. F(1)F(0) ATP synthase produces ATP from ADP in the presence of a proton or sodium gradient. F-type ATPases consist of two structural domains, F(1) containing the extramembraneous catalytic core and F(0) containing the membrane proton channel, linked together by a central stalk and a peripheral stalk. During catalysis, ATP synthesis in the catalytic domain of F(1) is coupled via a rotary mechanism of the central stalk subunits to proton translocation. Its function is as follows. Key component of the F(0) channel; it plays a direct role in translocation across the membrane. A homomeric c-ring of between 10-14 subunits forms the central stalk rotor element with the F(1) delta and epsilon subunits. This chain is ATP synthase subunit c, chloroplastic, found in Galdieria sulphuraria (Red alga).